A 285-amino-acid polypeptide reads, in one-letter code: NAD kinase (285 aa).

D64 acts as the Proton acceptor in catalysis. NAD(+) contacts are provided by residues 64–65 (DG), 138–139 (ND), R149, R166, D168, L176, 179–184 (SGYTIS), and Q238.

It belongs to the NAD kinase family. The cofactor is a divalent metal cation.

The protein localises to the cytoplasm. It catalyses the reaction NAD(+) + ATP = ADP + NADP(+) + H(+). Involved in the regulation of the intracellular balance of NAD and NADP, and is a key enzyme in the biosynthesis of NADP. Catalyzes specifically the phosphorylation on 2'-hydroxyl of the adenosine moiety of NAD to yield NADP. The polypeptide is NAD kinase (Lawsonia intracellularis (strain PHE/MN1-00)).